We begin with the raw amino-acid sequence, 332 residues long: DNA-directed RNA polymerase subunit alpha (332 aa).

The tract at residues 1–226 is alpha N-terminal domain (alpha-NTD); the sequence is MLIAQRPTLT…ELFGLCRELN (226 aa). Residues 245 to 332 are alpha C-terminal domain (alpha-CTD); the sequence is PEMNIPIEDL…GGTFFSPEDE (88 aa).

This sequence belongs to the RNA polymerase alpha chain family. In terms of assembly, homodimer. The RNAP catalytic core consists of 2 alpha, 1 beta, 1 beta' and 1 omega subunit. When a sigma factor is associated with the core the holoenzyme is formed, which can initiate transcription.

The enzyme catalyses RNA(n) + a ribonucleoside 5'-triphosphate = RNA(n+1) + diphosphate. DNA-dependent RNA polymerase catalyzes the transcription of DNA into RNA using the four ribonucleoside triphosphates as substrates. The polypeptide is DNA-directed RNA polymerase subunit alpha (Bifidobacterium adolescentis (strain ATCC 15703 / DSM 20083 / NCTC 11814 / E194a)).